We begin with the raw amino-acid sequence, 134 residues long: Phospholipase A2 (134 aa).

The Ca(2+) site is built by W8, G10, and G12. 5 disulfide bridges follow: C9–C31, C30–C70, C37–C63, C61–C95, and C105–C113. N-linked (GlcNAc...) asparagine glycosylation occurs at N13. H34 is a catalytic residue. Residue D35 participates in Ca(2+) binding. D64 is an active-site residue.

It belongs to the phospholipase A2 family. Group III subfamily. Ca(2+) is required as a cofactor. Expressed by the venom gland.

The protein localises to the secreted. The catalysed reaction is a 1,2-diacyl-sn-glycero-3-phosphocholine + H2O = a 1-acyl-sn-glycero-3-phosphocholine + a fatty acid + H(+). PLA2 catalyzes the calcium-dependent hydrolysis of the 2-acyl groups in 3-sn-phosphoglycerides. In Apis cerana cerana (Oriental honeybee), this protein is Phospholipase A2.